Reading from the N-terminus, the 266-residue chain is Exosome complex component Rrp42 (266 aa).

This sequence belongs to the RNase PH family. Rrp42 subfamily. In terms of assembly, component of the archaeal exosome complex. Forms a hexameric ring-like arrangement composed of 3 Rrp41-Rrp42 heterodimers. The hexameric ring associates with a trimer of Rrp4 and/or Csl4 subunits.

It is found in the cytoplasm. In terms of biological role, non-catalytic component of the exosome, which is a complex involved in RNA degradation. Contributes to the structuring of the Rrp41 active site. The protein is Exosome complex component Rrp42 of Methanosarcina mazei (strain ATCC BAA-159 / DSM 3647 / Goe1 / Go1 / JCM 11833 / OCM 88) (Methanosarcina frisia).